A 78-amino-acid polypeptide reads, in one-letter code: Gas vesicle protein A (78 aa).

The protein belongs to the gas vesicle GvpA family. In terms of assembly, the gas vesicle shell is 2 nm thick and consists of a single layer of this protein. It forms helical ribs nearly perpendicular to the long axis of the vesicle.

It is found in the gas vesicle shell. Gas vesicles are hollow, gas filled proteinaceous nanostructures found in some microorganisms. During planktonic growth they allow positioning of the organism at a favorable depth for light or nutrient acquisition. GvpA forms the protein shell. The chain is Gas vesicle protein A from Halorubrum vacuolatum (Natronobacterium vacuolatum).